The sequence spans 307 residues: 4-hydroxy-3-methylbut-2-enyl diphosphate reductase (307 aa).

Cys-12 is a [4Fe-4S] cluster binding site. His-41 and His-74 together coordinate (2E)-4-hydroxy-3-methylbut-2-enyl diphosphate. Residues His-41 and His-74 each contribute to the dimethylallyl diphosphate site. Isopentenyl diphosphate-binding residues include His-41 and His-74. Cys-96 is a binding site for [4Fe-4S] cluster. His-124 provides a ligand contact to (2E)-4-hydroxy-3-methylbut-2-enyl diphosphate. Residue His-124 coordinates dimethylallyl diphosphate. His-124 provides a ligand contact to isopentenyl diphosphate. Residue Glu-126 is the Proton donor of the active site. Thr-165 contributes to the (2E)-4-hydroxy-3-methylbut-2-enyl diphosphate binding site. [4Fe-4S] cluster is bound at residue Cys-195. 4 residues coordinate (2E)-4-hydroxy-3-methylbut-2-enyl diphosphate: Ser-223, Ser-224, Asn-225, and Ser-267. Residues Ser-223, Ser-224, Asn-225, and Ser-267 each contribute to the dimethylallyl diphosphate site. Ser-223, Ser-224, Asn-225, and Ser-267 together coordinate isopentenyl diphosphate.

It belongs to the IspH family. [4Fe-4S] cluster is required as a cofactor.

The catalysed reaction is isopentenyl diphosphate + 2 oxidized [2Fe-2S]-[ferredoxin] + H2O = (2E)-4-hydroxy-3-methylbut-2-enyl diphosphate + 2 reduced [2Fe-2S]-[ferredoxin] + 2 H(+). The enzyme catalyses dimethylallyl diphosphate + 2 oxidized [2Fe-2S]-[ferredoxin] + H2O = (2E)-4-hydroxy-3-methylbut-2-enyl diphosphate + 2 reduced [2Fe-2S]-[ferredoxin] + 2 H(+). The protein operates within isoprenoid biosynthesis; dimethylallyl diphosphate biosynthesis; dimethylallyl diphosphate from (2E)-4-hydroxy-3-methylbutenyl diphosphate: step 1/1. Its pathway is isoprenoid biosynthesis; isopentenyl diphosphate biosynthesis via DXP pathway; isopentenyl diphosphate from 1-deoxy-D-xylulose 5-phosphate: step 6/6. Catalyzes the conversion of 1-hydroxy-2-methyl-2-(E)-butenyl 4-diphosphate (HMBPP) into a mixture of isopentenyl diphosphate (IPP) and dimethylallyl diphosphate (DMAPP). Acts in the terminal step of the DOXP/MEP pathway for isoprenoid precursor biosynthesis. This chain is 4-hydroxy-3-methylbut-2-enyl diphosphate reductase, found in Magnetococcus marinus (strain ATCC BAA-1437 / JCM 17883 / MC-1).